The chain runs to 575 residues: G protein-coupled receptor kinase 4 (575 aa).

An N-acetylmethionine modification is found at Met-1. Residues 1 to 153 form an N-terminal region; sequence MELENFMANT…DCAGVIYKYL (153 aa). An RGS domain is found at 51-171; that stretch reads DFSSLCDQQP…QESTYYNRFL (121 aa). The region spanning 186 to 448 is the Protein kinase domain; it reads FRQYRVLGKG…ASAVKQHPIF (263 aa). Residues 192 to 200 and Lys-215 each bind ATP; that span reads LGKGGFGEV. Asp-311 acts as the Proton acceptor in catalysis. The region spanning 449–514 is the AGC-kinase C-terminal domain; sequence KDINFSRLEA…GCVTIPWQNE (66 aa). Ser-484 carries the post-translational modification Phosphoserine.

This sequence belongs to the protein kinase superfamily. AGC Ser/Thr protein kinase family. GPRK subfamily. In terms of assembly, interacts with DRD3. Post-translationally, palmitoylated. Isoform GRK4A is expressed in testis. Isoform GRK4B is heterogeneously distributed in the kidney, with 20-fold enrichment in the outer medulla. Has a widespread but low level of expression in tissues other than testis.

It localises to the cytoplasm. It is found in the cell cortex. The enzyme catalyses [G-protein-coupled receptor] + ATP = [G-protein-coupled receptor]-phosphate + ADP + H(+). Inhibited by heparin. Specifically phosphorylates the activated forms of G protein-coupled receptors. Plays an important role in the regulation of renal sodium handling and blood pressure. The chain is G protein-coupled receptor kinase 4 (Grk4) from Rattus norvegicus (Rat).